The chain runs to 370 residues: Vasopressin V2 receptor (370 aa).

A compositionally biased stretch (polar residues) spans 1-21 (MFMASTTSAVPWHLSQPTPAG). The segment at 1-26 (MFMASTTSAVPWHLSQPTPAGNGSEG) is disordered. Residues 1-38 (MFMASTTSAVPWHLSQPTPAGNGSEGELLTARDPLLAQ) lie on the Extracellular side of the membrane. Asn-22 carries N-linked (GlcNAc...) asparagine glycosylation. The helical transmembrane segment at 39–63 (AELALLSTVFVAVALSNGLVLGALV) threads the bilayer. Over 64–77 (RRGRRGRWAPMHVF) the chain is Cytoplasmic. Residues 78 to 98 (IGHLCLADLAVALFQVLPQLA) form a helical membrane-spanning segment. Residues 99 to 113 (WDATDRFRGPDALCR) lie on the Extracellular side of the membrane. The chain crosses the membrane as a helical span at residues 114 to 135 (AVKYLQMVGMYASSYMILAMTL). Residues 136-159 (DRHRAICRPMLAHRHGGGTHWNRP) are Cytoplasmic-facing. A helical membrane pass occupies residues 160-180 (VLLAWAFSLLFSLPQLFIFAQ). The Extracellular segment spans residues 181-199 (RDVDGSGVLDCWARFAEPW). Residues 200-219 (GLRAYVTWIALMVFVAPALG) traverse the membrane as a helical segment. Topologically, residues 220–270 (IAACQVLIFREIHASLGPGPVPRAGGPRRGCRPGSPAEGARVSAAVAKTVK) are cytoplasmic. The helical transmembrane segment at 271-292 (MTLVIVIVYVLCWAPFFLVQLW) threads the bilayer. Over 293 to 307 (AAWDPEAPREGPPFV) the chain is Extracellular. The chain crosses the membrane as a helical span at residues 308-327 (LLMLLASLNSCTNPWIYASF). At 328 to 370 (SSSISSELRSLLCCTWRRAPPSPGPQEESCATASSFLAKDTPS) the chain is on the cytoplasmic side. Residues Cys-340 and Cys-341 are each lipidated (S-palmitoyl cysteine). The segment at 347–370 (PPSPGPQEESCATASSFLAKDTPS) is disordered.

The protein belongs to the G-protein coupled receptor 1 family. Vasopressin/oxytocin receptor subfamily. As to quaternary structure, interacts with ARRDC4. Identified in a complex containing at least ARRDC4, V2R and HGS. Interacts with TMEM147.

It localises to the cell membrane. Functionally, receptor for arginine vasopressin. The activity of this receptor is mediated by G proteins which activate adenylate cyclase. Involved in renal water reabsorption. This chain is Vasopressin V2 receptor (AVPR2), found in Bos taurus (Bovine).